We begin with the raw amino-acid sequence, 192 residues long: SPbeta prophage-derived uncharacterized protein YokK (192 aa).

In Bacillus subtilis (strain 168), this protein is SPbeta prophage-derived uncharacterized protein YokK (yokK).